Consider the following 303-residue polypeptide: UDP-3-O-acyl-N-acetylglucosamine deacetylase (303 aa).

Zn(2+) is bound by residues H78, H237, and D241. H264 functions as the Proton donor in the catalytic mechanism.

The protein belongs to the LpxC family. Zn(2+) serves as cofactor.

The enzyme catalyses a UDP-3-O-[(3R)-3-hydroxyacyl]-N-acetyl-alpha-D-glucosamine + H2O = a UDP-3-O-[(3R)-3-hydroxyacyl]-alpha-D-glucosamine + acetate. It participates in glycolipid biosynthesis; lipid IV(A) biosynthesis; lipid IV(A) from (3R)-3-hydroxytetradecanoyl-[acyl-carrier-protein] and UDP-N-acetyl-alpha-D-glucosamine: step 2/6. Catalyzes the hydrolysis of UDP-3-O-myristoyl-N-acetylglucosamine to form UDP-3-O-myristoylglucosamine and acetate, the committed step in lipid A biosynthesis. This is UDP-3-O-acyl-N-acetylglucosamine deacetylase from Coxiella burnetii (strain CbuK_Q154) (Coxiella burnetii (strain Q154)).